The primary structure comprises 623 residues: Immunity-related GTPase family Q protein (623 aa).

Cysteines 152 and 158 form a disulfide. Residues 155–180 (SDGCEELERLRAALQSQAEALRRLLP) are a coiled coil. An LIR 1 motif is present at residues 186-189 (FEVL). Residue Thr203 is modified to Phosphothreonine. The region spanning 223 to 449 (ARLDLAVAGK…PGLCEWLRRA (227 aa)) is the IRG-type G domain. A disordered region spans residues 334–393 (EGEDPECLGEGKMENPKGESLKNAGGGGLENALSKGREKCSAGSQKAGSGEGPGKAGSEG). Positions 342 to 353 (GEGKMENPKGES) are enriched in basic and acidic residues. An LIR 2 motif is present at residues 421–424 (WEVL).

Belongs to the TRAFAC class dynamin-like GTPase superfamily. IRG family. As to quaternary structure, interacts (via LIR motif 1) with GABARAPL2. Interacts (via LIR motif 2) with MAP1LC3B/LC3B.

Its subcellular location is the lysosome. The protein localises to the cytoplasmic vesicle. The protein resides in the autophagosome. In terms of biological role, autophagy receptor that specifically promotes clearance of misfolded MHC class I molecules by targeting them to the lysosome for degradation. Acts as a molecular adapter that specifically recognizes and binds (1) misfolded MHC class I molecules following their ubiquitination, as well as (2) autophagy-related proteins, promoting the recruitment of misfolded MHC class I molecules to autophagy machinery for degradation. Degradation of misfolded MHC class I molecules is essential to prevent accumulation of defective MHC class I complexes at the surface of CD8(+) T-cells and prevent a stronger T-cell-mediated response. In contrast to other members of the family, does not show GTPase activity. The protein is Immunity-related GTPase family Q protein of Homo sapiens (Human).